Here is a 517-residue protein sequence, read N- to C-terminus: Amidophosphoribosyltransferase (517 aa).

The residue at position 1 (M1) is an N-acetylmethionine. Residues M1–E11 constitute a propeptide that is removed on maturation. Catalysis depends on C12, which acts as the Nucleophile. Residues C12–H261 enclose the Glutamine amidotransferase type-2 domain. C280 is a binding site for [4Fe-4S] cluster. 3 residues coordinate Mg(2+): S327, D389, and D390. 3 residues coordinate [4Fe-4S] cluster: C426, C503, and C506.

In the C-terminal section; belongs to the purine/pyrimidine phosphoribosyltransferase family. In terms of assembly, homotetramer. Mg(2+) serves as cofactor. [4Fe-4S] cluster is required as a cofactor. In terms of tissue distribution, expressed at a high level in brain, heart, liver and stomach.

The enzyme catalyses 5-phospho-beta-D-ribosylamine + L-glutamate + diphosphate = 5-phospho-alpha-D-ribose 1-diphosphate + L-glutamine + H2O. It participates in purine metabolism; IMP biosynthesis via de novo pathway; N(1)-(5-phospho-D-ribosyl)glycinamide from 5-phospho-alpha-D-ribose 1-diphosphate: step 1/2. Activated by the substrate 5-phospho-alpha-D-ribosyl-1-pyrophosphate and inhibited by the purine ribonucleotides, the end products of purine biosynthesis. Catalyzes the formation of phosphoribosylamine from phosphoribosylpyrophosphate (PRPP) and glutamine. This is Amidophosphoribosyltransferase (Ppat) from Rattus norvegicus (Rat).